The sequence spans 343 residues: MTRQITITRPDDWHLHVRDGDILNDVVPATAACFGRAIIMPNLVPPVTDASAAMAYRDRILAAARGTDFQPLMTLYLTESTTAETIREAKAAGVVAAKLYPAGATTNSASGVTDIRNIYPVLEAMADCGMLLLVHGEVTDSDIDIFDREKVFLERVLAPTLTAFPSLRVVLEHITTAESAEFVRNHQGNNLGATLTPQHLMYNRNHMLVGGIRPHLYCLPILKRNKHQEALREAVASGDPRFFLGTDSAPHAKDKKEAACGCAGCYSAYGAIGLYADIFEELGILDKLEAFASFNGADFYGLPRNTDTVTLVREPWTMPENLPLAGGGIVPLKAGETVNWRLA.

His14 and His16 together coordinate Zn(2+). Residues 16–18 and Asn42 contribute to the substrate site; that span reads HVR. Zn(2+) contacts are provided by Lys98, His135, and His173. The residue at position 98 (Lys98) is an N6-carboxylysine. His135 is a binding site for substrate. Leu219 serves as a coordination point for substrate. Asp247 is a Zn(2+) binding site. Asp247 is a catalytic residue. Substrate contacts are provided by His251 and Ala263.

This sequence belongs to the metallo-dependent hydrolases superfamily. DHOase family. Class II DHOase subfamily. As to quaternary structure, homodimer. It depends on Zn(2+) as a cofactor.

It carries out the reaction (S)-dihydroorotate + H2O = N-carbamoyl-L-aspartate + H(+). Its pathway is pyrimidine metabolism; UMP biosynthesis via de novo pathway; (S)-dihydroorotate from bicarbonate: step 3/3. In terms of biological role, catalyzes the reversible cyclization of carbamoyl aspartate to dihydroorotate. The sequence is that of Dihydroorotase from Marinobacter nauticus (strain ATCC 700491 / DSM 11845 / VT8) (Marinobacter aquaeolei).